Reading from the N-terminus, the 976-residue chain is Leucine--tRNA ligase (976 aa).

The short motif at 63–74 (PYPSGVGLHVGH) is the 'HIGH' region element. Residues 745-749 (KMGKS) carry the 'KMSKS' region motif. Residue K748 participates in ATP binding.

It belongs to the class-I aminoacyl-tRNA synthetase family.

It is found in the cytoplasm. The catalysed reaction is tRNA(Leu) + L-leucine + ATP = L-leucyl-tRNA(Leu) + AMP + diphosphate. The protein is Leucine--tRNA ligase of Corynebacterium jeikeium (strain K411).